A 404-amino-acid chain; its full sequence is 4-hydroxy-3-methylbut-2-en-1-yl diphosphate synthase (flavodoxin) (404 aa).

4 residues coordinate [4Fe-4S] cluster: Cys310, Cys313, Cys345, and Glu352.

This sequence belongs to the IspG family. The cofactor is [4Fe-4S] cluster.

It catalyses the reaction (2E)-4-hydroxy-3-methylbut-2-enyl diphosphate + oxidized [flavodoxin] + H2O + 2 H(+) = 2-C-methyl-D-erythritol 2,4-cyclic diphosphate + reduced [flavodoxin]. Its pathway is isoprenoid biosynthesis; isopentenyl diphosphate biosynthesis via DXP pathway; isopentenyl diphosphate from 1-deoxy-D-xylulose 5-phosphate: step 5/6. Functionally, converts 2C-methyl-D-erythritol 2,4-cyclodiphosphate (ME-2,4cPP) into 1-hydroxy-2-methyl-2-(E)-butenyl 4-diphosphate. This is 4-hydroxy-3-methylbut-2-en-1-yl diphosphate synthase (flavodoxin) from Treponema pallidum (strain Nichols).